The sequence spans 548 residues: Rhodopsin kinase grk7-b (548 aa).

The residue at position 33 (Ser33) is a Phosphoserine; by PKA. The 120-residue stretch at 53 to 172 (FEDICEQQPI…QTSLFFDRFV (120 aa)) folds into the RGS domain. Residues 187 to 446 (FYEFRTLGKG…NDDPRKHEFF (260 aa)) enclose the Protein kinase domain. Residues 193 to 201 (LGKGGFGEV) and Lys216 contribute to the ATP site. Asp312 acts as the Proton acceptor in catalysis. An AGC-kinase C-terminal domain is found at 447–512 (KSINFPRLEA…GVVPIAWQQE (66 aa)). Residues 520–548 (DELSDPNRKESAAGLEDEEQQKSKSCTLL) are disordered. Cys545 carries the cysteine methyl ester modification. The S-geranylgeranyl cysteine moiety is linked to residue Cys545. Positions 546-548 (TLL) are cleaved as a propeptide — removed in mature form.

The protein belongs to the protein kinase superfamily. AGC Ser/Thr protein kinase family. GPRK subfamily. Phosphorylation at Ser-33 is regulated by light and activated by cAMP. Expressed in the eyes (at protein level). Expressed in the eyes, the pineal gland and in the brain.

It localises to the membrane. It catalyses the reaction L-threonyl-[rhodopsin] + ATP = O-phospho-L-threonyl-[rhodopsin] + ADP + H(+). It carries out the reaction L-seryl-[rhodopsin] + ATP = O-phospho-L-seryl-[rhodopsin] + ADP + H(+). Functionally, retina-specific kinase involved in the shutoff of the photoresponse and adaptation to changing light conditions via cone opsin phosphorylation, including rhodopsin (RHO). The polypeptide is Rhodopsin kinase grk7-b (grk7b) (Danio rerio (Zebrafish)).